A 442-amino-acid chain; its full sequence is Yes-associated protein homolog 1 (442 aa).

Residues 1 to 10 (MASKSIHKKH) are compositionally biased toward basic residues. Positions 1-84 (MASKSIHKKH…GSVDESSRTA (84 aa)) are disordered. 2 stretches are compositionally biased toward polar residues: residues 13–22 (NSQQDKNQFS) and 55–71 (LPSSYYHQKRNPGSSAH). Residue Ser104 is modified to Phosphoserine. The segment covering 108 to 120 (LHTSVNNGQSSAT) has biased composition (polar residues). Residues 108–136 (LHTSVNNGQSSATVPHPSHHNVHHQHSKS) are disordered. Residues 124 to 134 (PSHHNVHHQHS) show a composition bias toward basic residues. In terms of domain architecture, WW spans 203 to 236 (LPMPQGWEMCYDSDGVRYFKDHNSKTTTWDDPRL).

It belongs to the YAP1 family. Highly divergent. Interacts (via WW domain) with wts-1 (via N-terminus). Interacts (via WW domain) with egl-44; the interaction may regulate transcription. In terms of tissue distribution, expressed in epithelia, hypodermis, muscles, pharynx, intestine, gonadal sheath cells, vulva, spermatheca and in excretory tissue.

Its subcellular location is the cytoplasm. The protein resides in the nucleus. It is found in the cell projection. It localises to the cilium. The protein localises to the cytoskeleton. Its subcellular location is the cilium axoneme. In terms of biological role, plays a role in thermal stress response and in aging. The chain is Yes-associated protein homolog 1 from Caenorhabditis elegans.